The following is a 376-amino-acid chain: Cysteine proteinase 2 (376 aa).

The signal sequence occupies residues 1 to 18 (MRLLVFLILLIFVNFSFA). Residues 19 to 122 (NVRPNGRRFS…EVLNVEDLQT (104 aa)) constitute a propeptide, activation peptide. 3 disulfides stabilise this stretch: Cys144–Cys187, Cys178–Cys221, and Cys279–Cys365. Cys147 is an active-site residue. Residues His286 and Asn343 contribute to the active site.

The protein belongs to the peptidase C1 family.

The protein localises to the lysosome. Its function is as follows. Cysteine proteinases 1 and 2 are believed to participate in the breakdown of protein during differentiation of Dictyostelium as a response to starvation. The chain is Cysteine proteinase 2 (cprB) from Dictyostelium discoideum (Social amoeba).